A 438-amino-acid chain; its full sequence is tRNA-2-methylthio-N(6)-dimethylallyladenosine synthase (438 aa).

One can recognise an MTTase N-terminal domain in the interval 3 to 123; the sequence is KRLFVKTYGC…LPEMVAQAAR (121 aa). 6 residues coordinate [4Fe-4S] cluster: Cys-12, Cys-48, Cys-86, Cys-160, Cys-164, and Cys-167. Residues 146–374 form the Radical SAM core domain; that stretch reads HAEGTSAFLS…QALLLDQTMR (229 aa). One can recognise a TRAM domain in the interval 377–438; that stretch reads HACVGREMRI…HPNSLEAVPA (62 aa).

This sequence belongs to the methylthiotransferase family. MiaB subfamily. In terms of assembly, monomer. [4Fe-4S] cluster serves as cofactor.

The protein localises to the cytoplasm. It catalyses the reaction N(6)-dimethylallyladenosine(37) in tRNA + (sulfur carrier)-SH + AH2 + 2 S-adenosyl-L-methionine = 2-methylsulfanyl-N(6)-dimethylallyladenosine(37) in tRNA + (sulfur carrier)-H + 5'-deoxyadenosine + L-methionine + A + S-adenosyl-L-homocysteine + 2 H(+). Catalyzes the methylthiolation of N6-(dimethylallyl)adenosine (i(6)A), leading to the formation of 2-methylthio-N6-(dimethylallyl)adenosine (ms(2)i(6)A) at position 37 in tRNAs that read codons beginning with uridine. The sequence is that of tRNA-2-methylthio-N(6)-dimethylallyladenosine synthase from Paramagnetospirillum magneticum (strain ATCC 700264 / AMB-1) (Magnetospirillum magneticum).